Reading from the N-terminus, the 400-residue chain is Lysophospholipid transporter LplT (400 aa).

A run of 12 helical transmembrane segments spans residues 19 to 39 (VIVA…ATLA), 53 to 73 (VLQM…GQIA), 91 to 111 (AGAA…LVGI), 139 to 159 (LMEA…GVLA), 164 to 184 (IAAL…NLFI), 195 to 213 (SWRL…VVLW), 227 to 247 (LFWG…PVAL), 257 to 277 (YLNA…AKLV), 281 to 301 (TVSR…IFSL), 304 to 324 (ALLP…FFVV), 352 to 372 (NSAM…GVPA), and 373 to 393 (VAIG…LWIW).

The protein belongs to the major facilitator superfamily. LplT (TC 2.A.1.42) family.

It is found in the cell inner membrane. Catalyzes the facilitated diffusion of 2-acyl-glycero-3-phosphoethanolamine (2-acyl-GPE) into the cell. This is Lysophospholipid transporter LplT from Salmonella newport (strain SL254).